The sequence spans 302 residues: Deoxyhypusine hydroxylase (302 aa).

Residue methionine 1 is modified to N-acetylmethionine. HEAT-like PBS-type repeat units lie at residues 54 to 80 (LKHE…VLQD), 87 to 113 (VRHE…YSTD), 175 to 201 (ERYR…GLKC), 206 to 232 (FRHE…TLAR), and 239 to 265 (VRHE…YITD). Residues histidine 56, histidine 89, and glutamate 90 each contribute to the Fe cation site. Fe cation is bound by residues histidine 208, histidine 241, and glutamate 242.

This sequence belongs to the deoxyhypusine hydroxylase family. Fe(2+) is required as a cofactor.

It carries out the reaction [eIF5A protein]-deoxyhypusine + AH2 + O2 = [eIF5A protein]-hypusine + A + H2O. It participates in protein modification; eIF5A hypusination. In terms of biological role, catalyzes the hydroxylation of the N(6)-(4-aminobutyl)-L-lysine intermediate produced by deoxyhypusine synthase/DHPS on a critical lysine of the eukaryotic translation initiation factor 5A/eIF-5A. This is the second step of the post-translational modification of that lysine into an unusual amino acid residue named hypusine. Hypusination is unique to mature eIF-5A factor and is essential for its function. The polypeptide is Deoxyhypusine hydroxylase (Dohh) (Rattus norvegicus (Rat)).